Consider the following 198-residue polypeptide: MIVLSVGSASSSPIVVVFSVALLLFYFSETSLGAPCPINGLPIVRNISDLPQDNYGRPGLSHMTVAGSVLHGMKEVEIWLQTFAPGSETPIHRHSCEEVFVVLKGSGTLYLAETHGNFPGKPIEFPIFANSTIHIPINDAHQVKNTGHEDLQVLVIISRPPIKIFIYEDWFMPHTAARLKFPYYWDEQCIQESQKDEL.

The signal sequence occupies residues methionine 1–glycine 33. Cysteine 36 and cysteine 189 are disulfide-bonded. Zn(2+)-binding residues include histidine 92, histidine 94, and glutamate 98. Asparagine 130 carries N-linked (GlcNAc...) asparagine glycosylation. Residue histidine 141 participates in Zn(2+) binding. A Prevents secretion from ER motif is present at residues lysine 195–leucine 198.

As to quaternary structure, homodimer. May interact with the GPI-anchored plasma membrane protein SKU5 and its family members. Interacts with TMK1 (via extracellular domain). In terms of processing, glycosylated. Ubiquitinated by RMA2, leading to proteasomal degradation.

The protein resides in the endoplasmic reticulum lumen. Its subcellular location is the cell membrane. Auxin receptor that controls cell elongation and cell division. Involved in embryonic morphogenesis. Acts on the cell cycle, endocycle, cell plate formation, and cell expansion and contributes to the control of auxin-related gene expression. Controls root meristem size and mediates auxin responsiveness. Involved in activation of ROP GTPases in response to auxin and regulation of clathrin-mediated endocytosis in roots. Acts as a positive factor in clathrin recruitment to the plasma membrane, thereby promoting endocytosis. Upon auxin binding, restricts the internalization of PIN proteins by inhibiting clathrin-mediated endocytosis. Promotes auxin-triggered phosphorylation status modulation of RAF-like kinases (e.g. RAF20 and RAF24). Involved in the regulation of polar auxin transport. Behaves as a negative regulator of the SCF(TIR1/AFB) signaling pathway, protecting AUX/IAA repressors from degradation. Regulates the expression of cell wall remodeling genes via an SCF(TIR1/AFB)-dependent pathway. Involved in the modulation of hemicellulose xyloglucan structure. Required for rapid auxin-mediated re-orientation of microtubules to regulate cell elongation in roots and dark-grown hypocotyls as well as asymmetric growth during gravitropic responses. Involved in the shade avoidance response. Forms with TMK1 a cell surface auxin perception complex that activates ROP signaling pathways. ABP1 sensing of auxin is important for the ABP1-TMK1 complex formation. Interacts functionally with phytochrome to regulate growth. This chain is Auxin-binding protein 1, found in Arabidopsis thaliana (Mouse-ear cress).